A 381-amino-acid polypeptide reads, in one-letter code: Orotidine 5'-phosphate decarboxylase (381 aa).

Residues D42, 64-66, 99-108, Y333, and R352 contribute to the substrate site; these read KTH and DRKFGDIGHT. K101 functions as the Proton donor in the catalytic mechanism. Residues 311–333 form a disordered region; sequence LPPEDEDQQTNGSVGGDGQGQQY.

The protein belongs to the OMP decarboxylase family.

The catalysed reaction is orotidine 5'-phosphate + H(+) = UMP + CO2. It functions in the pathway pyrimidine metabolism; UMP biosynthesis via de novo pathway; UMP from orotate: step 2/2. The polypeptide is Orotidine 5'-phosphate decarboxylase (ura3) (Hypocrea jecorina (Trichoderma reesei)).